Reading from the N-terminus, the 546-residue chain is Chaperonin GroEL 1 (546 aa).

Residues 30 to 33 (TLGP), K51, 87 to 91 (DGTTT), G415, 479 to 481 (NAA), and D495 contribute to the ATP site. Residues 526–546 (KEDAPMPGGMPGGMGGMGMDM) are disordered. The segment covering 534–546 (GMPGGMGGMGMDM) has biased composition (gly residues).

It belongs to the chaperonin (HSP60) family. As to quaternary structure, forms a cylinder of 14 subunits composed of two heptameric rings stacked back-to-back. Interacts with the co-chaperonin GroES.

It localises to the cytoplasm. The enzyme catalyses ATP + H2O + a folded polypeptide = ADP + phosphate + an unfolded polypeptide.. Its function is as follows. Together with its co-chaperonin GroES, plays an essential role in assisting protein folding. The GroEL-GroES system forms a nano-cage that allows encapsulation of the non-native substrate proteins and provides a physical environment optimized to promote and accelerate protein folding. This Burkholderia pseudomallei (strain 1106a) protein is Chaperonin GroEL 1.